Here is a 907-residue protein sequence, read N- to C-terminus: Protein translocase subunit SecA (907 aa).

ATP-binding positions include Q86, 104 to 108 (GEGKT), and D511. Basic and acidic residues-rich tracts occupy residues 838-856 (AQEE…HESV) and 869-888 (EEAP…KRND). Residues 838–907 (AQEEWKESMS…YKQCHGKVVD (70 aa)) form a disordered region. Zn(2+) contacts are provided by C890, C892, C901, and H902. Positions 896–907 (KKYKQCHGKVVD) are enriched in basic residues.

The protein belongs to the SecA family. In terms of assembly, monomer and homodimer. Part of the essential Sec protein translocation apparatus which comprises SecA, SecYEG and auxiliary proteins SecDF-YajC and YidC. The cofactor is Zn(2+).

Its subcellular location is the cell inner membrane. It localises to the cytoplasm. The catalysed reaction is ATP + H2O + cellular proteinSide 1 = ADP + phosphate + cellular proteinSide 2.. In terms of biological role, part of the Sec protein translocase complex. Interacts with the SecYEG preprotein conducting channel. Has a central role in coupling the hydrolysis of ATP to the transfer of proteins into and across the cell membrane, serving both as a receptor for the preprotein-SecB complex and as an ATP-driven molecular motor driving the stepwise translocation of polypeptide chains across the membrane. The chain is Protein translocase subunit SecA from Francisella philomiragia subsp. philomiragia (strain ATCC 25017 / CCUG 19701 / FSC 153 / O#319-036).